A 292-amino-acid polypeptide reads, in one-letter code: NAD kinase (292 aa).

Residue Asp-73 is the Proton acceptor of the active site. NAD(+) is bound by residues 73–74 (DG), 147–148 (NE), His-158, Arg-175, Asp-177, 188–193 (TGYSLS), and Gln-247.

The protein belongs to the NAD kinase family. It depends on a divalent metal cation as a cofactor.

The protein localises to the cytoplasm. The enzyme catalyses NAD(+) + ATP = ADP + NADP(+) + H(+). Involved in the regulation of the intracellular balance of NAD and NADP, and is a key enzyme in the biosynthesis of NADP. Catalyzes specifically the phosphorylation on 2'-hydroxyl of the adenosine moiety of NAD to yield NADP. This is NAD kinase from Buchnera aphidicola subsp. Schizaphis graminum (strain Sg).